Consider the following 157-residue polypeptide: S-ribosylhomocysteine lyase (157 aa).

Fe cation contacts are provided by His-54, His-58, and Cys-124.

Belongs to the LuxS family. Homodimer. Fe cation serves as cofactor.

The catalysed reaction is S-(5-deoxy-D-ribos-5-yl)-L-homocysteine = (S)-4,5-dihydroxypentane-2,3-dione + L-homocysteine. In terms of biological role, involved in the synthesis of autoinducer 2 (AI-2) which is secreted by bacteria and is used to communicate both the cell density and the metabolic potential of the environment. The regulation of gene expression in response to changes in cell density is called quorum sensing. Catalyzes the transformation of S-ribosylhomocysteine (RHC) to homocysteine (HC) and 4,5-dihydroxy-2,3-pentadione (DPD). In Pediococcus pentosaceus (strain ATCC 25745 / CCUG 21536 / LMG 10740 / 183-1w), this protein is S-ribosylhomocysteine lyase.